The primary structure comprises 295 residues: Elongation factor Ts (295 aa).

The interval 79–82 (TDFV) is involved in Mg(2+) ion dislocation from EF-Tu.

This sequence belongs to the EF-Ts family.

Its subcellular location is the cytoplasm. Functionally, associates with the EF-Tu.GDP complex and induces the exchange of GDP to GTP. It remains bound to the aminoacyl-tRNA.EF-Tu.GTP complex up to the GTP hydrolysis stage on the ribosome. The polypeptide is Elongation factor Ts (Bacillus cereus (strain B4264)).